The chain runs to 448 residues: Exodeoxyribonuclease 7 large subunit (448 aa).

This sequence belongs to the XseA family. Heterooligomer composed of large and small subunits.

Its subcellular location is the cytoplasm. The catalysed reaction is Exonucleolytic cleavage in either 5'- to 3'- or 3'- to 5'-direction to yield nucleoside 5'-phosphates.. Bidirectionally degrades single-stranded DNA into large acid-insoluble oligonucleotides, which are then degraded further into small acid-soluble oligonucleotides. This is Exodeoxyribonuclease 7 large subunit from Shewanella sp. (strain ANA-3).